The chain runs to 346 residues: MVSSNFYKNLGPRKLTAIIDFLHDIIEPTKIHEDIDIHDIKILQEASPNDISFLSNPKYSEFLKTTKAAACIVPKDFTEESNQNTVLIHAENSYFAYSKLIDFFYAPIKSYSTKIMKSAIIADSAAIGKNCYIGHNVVIEDDVIIGDNSIIDAGTFIGRGVNIGKNARIEQHVSINYAIIGDDVVILVGAKIGQDGFGFATEKGVHNKIFHIGIVKIGNNVEIGSNTTIDRGALQDTIIEDLCRIDNLVQIGHGVKIGKGSIIVAQAGIAGSSAIGKYCALGGQVGIAGHLNIGDRTQVAAQGGVAQNIEEGKIVGGSPAVPIMDWHRQSIIMKQLVKTSNNKLKK.

Residue His-253 is the Proton acceptor of the active site.

This sequence belongs to the transferase hexapeptide repeat family. LpxD subfamily. As to quaternary structure, homotrimer.

The enzyme catalyses a UDP-3-O-[(3R)-3-hydroxyacyl]-alpha-D-glucosamine + a (3R)-hydroxyacyl-[ACP] = a UDP-2-N,3-O-bis[(3R)-3-hydroxyacyl]-alpha-D-glucosamine + holo-[ACP] + H(+). It participates in bacterial outer membrane biogenesis; LPS lipid A biosynthesis. In terms of biological role, catalyzes the N-acylation of UDP-3-O-acylglucosamine using 3-hydroxyacyl-ACP as the acyl donor. Is involved in the biosynthesis of lipid A, a phosphorylated glycolipid that anchors the lipopolysaccharide to the outer membrane of the cell. The protein is UDP-3-O-acylglucosamine N-acyltransferase of Rickettsia typhi (strain ATCC VR-144 / Wilmington).